The following is an 84-amino-acid chain: Putative membrane protein insertion efficiency factor (84 aa).

Belongs to the UPF0161 family.

Its subcellular location is the cell inner membrane. Functionally, could be involved in insertion of integral membrane proteins into the membrane. The chain is Putative membrane protein insertion efficiency factor from Shewanella loihica (strain ATCC BAA-1088 / PV-4).